Reading from the N-terminus, the 377-residue chain is Queuine tRNA-ribosyltransferase (377 aa).

The active-site Proton acceptor is the aspartate 91. Residues 91-95 (DSGGF), aspartate 145, glutamine 189, and glycine 216 each bind substrate. The interval 247–253 (GVGKPED) is RNA binding. Aspartate 266 (nucleophile) is an active-site residue. Positions 271-275 (TRNAR) are RNA binding; important for wobble base 34 recognition. Residues cysteine 304, cysteine 306, cysteine 309, and histidine 335 each coordinate Zn(2+).

This sequence belongs to the queuine tRNA-ribosyltransferase family. As to quaternary structure, homodimer. Within each dimer, one monomer is responsible for RNA recognition and catalysis, while the other monomer binds to the replacement base PreQ1. Zn(2+) is required as a cofactor.

The catalysed reaction is 7-aminomethyl-7-carbaguanine + guanosine(34) in tRNA = 7-aminomethyl-7-carbaguanosine(34) in tRNA + guanine. It functions in the pathway tRNA modification; tRNA-queuosine biosynthesis. Its function is as follows. Catalyzes the base-exchange of a guanine (G) residue with the queuine precursor 7-aminomethyl-7-deazaguanine (PreQ1) at position 34 (anticodon wobble position) in tRNAs with GU(N) anticodons (tRNA-Asp, -Asn, -His and -Tyr). Catalysis occurs through a double-displacement mechanism. The nucleophile active site attacks the C1' of nucleotide 34 to detach the guanine base from the RNA, forming a covalent enzyme-RNA intermediate. The proton acceptor active site deprotonates the incoming PreQ1, allowing a nucleophilic attack on the C1' of the ribose to form the product. After dissociation, two additional enzymatic reactions on the tRNA convert PreQ1 to queuine (Q), resulting in the hypermodified nucleoside queuosine (7-(((4,5-cis-dihydroxy-2-cyclopenten-1-yl)amino)methyl)-7-deazaguanosine). This is Queuine tRNA-ribosyltransferase from Vibrio parahaemolyticus serotype O3:K6 (strain RIMD 2210633).